An 877-amino-acid polypeptide reads, in one-letter code: AP-5 complex subunit beta-1 (877 aa).

In terms of assembly, probably part of the adaptor protein complex 5 (AP-5), a tetramer composed of AP5B1, AP5M1, AP5S1 and AP5Z1. Interacts with ZFYVE26 and SPG11.

As part of AP-5, a probable fifth adaptor protein complex, it may be involved in endosomal transport. This chain is AP-5 complex subunit beta-1 (AP5B1), found in Bos taurus (Bovine).